Consider the following 204-residue polypeptide: Large ribosomal subunit protein eL15y (204 aa).

It belongs to the eukaryotic ribosomal protein eL15 family.

This chain is Large ribosomal subunit protein eL15y (SB62), found in Picea mariana (Black spruce).